A 363-amino-acid chain; its full sequence is Outer membrane porin F (363 aa).

The first 22 residues, 1–22 (MMKRKILAAVIPALLAAATANA), serve as a signal peptide directing secretion. The chain crosses the membrane as a beta stranded span at residues 23–28 (AEIYNK). Aspartate 29 is a topological domain (periplasmic). Residues 30-45 (GNKLDLYGKAVGRHVW) traverse the membrane as a beta stranded segment. Residues 46 to 56 (TTTGDSKNADQ) lie on the Extracellular side of the membrane. Residues 57–69 (TYAQIGFKGETQI) form a beta stranded membrane-spanning segment. Topologically, residues 70–71 (NT) are periplasmic. Residues 72–84 (DLTGFGQWEYRTK) traverse the membrane as a beta stranded segment. Topologically, residues 85–99 (ADRAEGEQQNSNLVR) are extracellular. Residues 100–108 (LAFAGLKYA) traverse the membrane as a beta stranded segment. Residue glutamate 109 is a topological domain, periplasmic. Residues 110-117 (VGSIDYGR) form a beta stranded membrane-spanning segment. Residues 118–154 (NYGIVYDVESYTDMAPYFSGETWGGAYTDNYMTSRAG) are Extracellular-facing. A beta stranded membrane pass occupies residues 155 to 161 (GLLTYRN). The Periplasmic portion of the chain corresponds to 162–169 (SDFFGLVD). Residues 170-181 (GLSFGIQYQGKN) traverse the membrane as a beta stranded segment. Residues 182–192 (QDNHSINSQNG) lie on the Extracellular side of the membrane. A beta stranded transmembrane segment spans residues 193-203 (DGVGYTMAYEF). Position 204 (aspartate 204) is a topological domain, periplasmic. The beta stranded transmembrane segment at 205–217 (GFGVTAAYSNSKR) threads the bilayer. The Extracellular segment spans residues 218–230 (TNDQQDRDGNGDR). Residues 231–242 (AESWAVGAKYDA) form a beta stranded membrane-spanning segment. Asparagine 243 is a topological domain (periplasmic). Residues 244–256 (NVYLAAVYAETRN) form a beta stranded membrane-spanning segment. At 257–272 (MSIVENTVTDTVEMAN) the chain is on the extracellular side. Residues 273-285 (KTQNLEVVAQYQF) form a beta stranded membrane-spanning segment. Over 286–287 (DF) the chain is Periplasmic. The chain crosses the membrane as a beta stranded span at residues 288–301 (GLRPAISYVQSKGK). Residues 302-312 (QLNGADGSADL) are Extracellular-facing. The beta stranded transmembrane segment at 313–324 (AKYIQAGATYYF) threads the bilayer. Over 325-326 (NK) the chain is Periplasmic. A beta stranded transmembrane segment spans residues 327–336 (NMNVWVDYRF). Residues 337–353 (NLLDENDYSSSYVGTDD) are Extracellular-facing. The chain crosses the membrane as a beta stranded span at residues 354–363 (QAAVGITYQF).

Belongs to the Gram-negative porin family. Homotrimer. Forms mixed heterotrimers with OmpC and with PhoE; other mixed heterotrimers with other porins are also probable.

The protein localises to the cell outer membrane. In terms of biological role, forms pores that allow passive diffusion of small molecules across the outer membrane. The chain is Outer membrane porin F (ompF) from Salmonella typhi.